Consider the following 905-residue polypeptide: Gamma-tubulin complex component 2 (905 aa).

Residue Tyr83 is modified to Phosphotyrosine. Residues 877–905 (AERSQKAAPQVPVPRGPSAPAPRVAIPAQ) are disordered. Residues 887 to 896 (VPVPRGPSAP) are compositionally biased toward pro residues.

Belongs to the TUBGCP family. In terms of assembly, component of the gamma-tubulin ring complex (gTuRC) consisting of TUBGCP2, TUBGCP3, TUBGCP4, TUBGCP5 and TUBGCP6 and gamma-tubulin TUBG1 or TUBG2. TUBGCP2, TUBGCP3, TUBGCP4, TUBGCP5 and TUBGCP6 assemble in a 5:5:2:1:1 stoichiometry; each is associated with a gamma-tubulin, thereby arranging 14 gamma-tubulins in a helical manner. Gamma-tubulin at the first position is blocked by TUBGCP3 at the last position, allowing 13 protafilaments to grow into a microtubule. The gTuRC (via TUBGCP3 and TUBGCP6) interacts with ACTB and MZT1; the interactions form a luminal bridge that stabilizes the initial structure during complex assembly. The gTuRC (via TUBGCP2) interacts with MZT2A/MZT2B and CDK5RAP2 (via CM1 motif); the interactions play a role in gTuRC activation. Interacts with ATF5; the ATF5:PCNT:polyglutamylated tubulin (PGT) tripartite unites the mother centriole and the pericentriolar material (PCM) in the centrosome.

The protein resides in the cytoplasm. The protein localises to the cytoskeleton. It localises to the microtubule organizing center. It is found in the centrosome. In terms of biological role, component of the gamma-tubulin ring complex (gTuRC) which mediates microtubule nucleation. The gTuRC regulates the minus-end nucleation of alpha-beta tubulin heterodimers that grow into microtubule protafilaments, a critical step in centrosome duplication and spindle formation. Plays a role in neuronal migration. The chain is Gamma-tubulin complex component 2 (Tubgcp2) from Mus musculus (Mouse).